The following is a 167-amino-acid chain: Small ribosomal subunit protein uS5 (167 aa).

The S5 DRBM domain occupies 11 to 74 (LQEKLIAVNR…EKARRNMINV (64 aa)).

This sequence belongs to the universal ribosomal protein uS5 family. As to quaternary structure, part of the 30S ribosomal subunit. Contacts proteins S4 and S8.

With S4 and S12 plays an important role in translational accuracy. In terms of biological role, located at the back of the 30S subunit body where it stabilizes the conformation of the head with respect to the body. This Escherichia coli O139:H28 (strain E24377A / ETEC) protein is Small ribosomal subunit protein uS5.